Consider the following 146-residue polypeptide: Phospho-2-dehydro-3-deoxyheptonate aldolase (146 aa).

The protein belongs to the class-II DAHP synthase family. In terms of assembly, homodimer.

It carries out the reaction D-erythrose 4-phosphate + phosphoenolpyruvate + H2O = 7-phospho-2-dehydro-3-deoxy-D-arabino-heptonate + phosphate. It functions in the pathway metabolic intermediate biosynthesis; chorismate biosynthesis; chorismate from D-erythrose 4-phosphate and phosphoenolpyruvate: step 1/7. This Streptomyces lividans protein is Phospho-2-dehydro-3-deoxyheptonate aldolase.